Here is a 323-residue protein sequence, read N- to C-terminus: Large ribosomal subunit protein uL10 (323 aa).

The disordered stretch occupies residues 296–323 (AAPAAPSAAAKEEPEESDEDDFGMGGLF). Residues 308 to 317 (EPEESDEDDF) show a composition bias toward acidic residues.

The protein belongs to the universal ribosomal protein uL10 family. In terms of assembly, P0 forms a pentameric complex by interaction with dimers of P1 and P2. Phosphorylated.

Functionally, ribosomal protein P0 is the functional equivalent of E.coli protein L10. This chain is Large ribosomal subunit protein uL10 (LIPO-A), found in Leishmania infantum.